The sequence spans 151 residues: Caveolin-3 (151 aa).

Over 1 to 83 (MMAEERTDLE…RLLSTLLGVP (83 aa)) the chain is Cytoplasmic. Residue lysine 38 forms a Glycyl lysine isopeptide (Lys-Gly) (interchain with G-Cter in SUMO3) linkage. Residues 64 to 114 (TFTVSKYWCYRLLSTLLGVPLALLWGFLFACISFCHIWAVVPCIKSYLIEI) are required for interaction with DAG1. Positions 84 to 104 (LALLWGFLFACISFCHIWAVV) form an intramembrane region, helical. The Cytoplasmic segment spans residues 105 to 151 (PCIKSYLIEIQCISHIYSLCIRTFCNPVFAALGQVCSNIKVMLRKEV).

It belongs to the caveolin family. Homooligomer. Interacts with DYSF. Interacts with DLG1 and KCNA5; forms a ternary complex. Interacts with DAG1 (via its C-terminal); the interaction prevents binding of DAG1 with DMD. Interacts with TRIM72. Interacts with MUSK; may regulate MUSK signaling. Interacts with POPDC1. Interacts with CAVIN1, CAVIN2 and CAVIN4. Sumoylation with SUMO3 by PIAS4 may reduce agonist-induced internalization and desensitization of adrenergic receptor ABRD2. Expressed specifically in skeletal muscle and heart.

The protein localises to the golgi apparatus membrane. It is found in the cell membrane. Its subcellular location is the membrane. It localises to the caveola. The protein resides in the sarcolemma. Functionally, may act as a scaffolding protein within caveolar membranes. Interacts directly with G-protein alpha subunits and can functionally regulate their activity. May also regulate voltage-gated potassium channels. Plays a role in the sarcolemma repair mechanism of both skeletal muscle and cardiomyocytes that permits rapid resealing of membranes disrupted by mechanical stress. Mediates the recruitment of CAVIN2 and CAVIN3 proteins to the caveolae. This chain is Caveolin-3 (CAV3), found in Sus scrofa (Pig).